Here is a 590-residue protein sequence, read N- to C-terminus: Arginine--tRNA ligase (590 aa).

The 'HIGH' region motif lies at 130–140 (PNIAKEMHVGH).

The protein belongs to the class-I aminoacyl-tRNA synthetase family. As to quaternary structure, monomer.

It is found in the cytoplasm. It catalyses the reaction tRNA(Arg) + L-arginine + ATP = L-arginyl-tRNA(Arg) + AMP + diphosphate. This Synechococcus sp. (strain CC9605) protein is Arginine--tRNA ligase.